The following is a 201-amino-acid chain: Twist-related protein 1 (201 aa).

Residues Met1–Ser18 are compositionally biased toward low complexity. Residues Met1–Glu106 form a disordered region. Positions Arg34–Arg43 are enriched in basic residues. Composition is skewed to gly residues over residues Ala46–Glu65 and Gly80–Ser100. Positions Thr109 to Leu160 constitute a bHLH domain. The sufficient for transactivation activity stretch occupies residues Gln162 to Arg190.

In terms of assembly, efficient DNA binding requires dimerization with another bHLH protein. Homodimer or heterodimer with E proteins such as TCF3. ID1 binds preferentially to TCF3 but does not interact efficiently with TWIST1 so ID1 levels control the amount of TCF3 available to dimerize with TWIST and thus determine the type of dimer formed.

The protein resides in the nucleus. Its function is as follows. Acts as a transcriptional regulator. Inhibits myogenesis by sequestrating E proteins, inhibiting trans-activation by MEF2, and inhibiting DNA-binding by MYOD1 through physical interaction. This interaction probably involves the basic domains of both proteins. Also represses expression of pro-inflammatory cytokines such as TNFA and IL1B. Regulates cranial suture patterning and fusion. Activates transcription as a heterodimer with E proteins. Regulates gene expression differentially, depending on dimer composition. Homodimers induce expression of FGFR2 and POSTN while heterodimers repress FGFR2 and POSTN expression and induce THBS1 expression. Heterodimerization is also required for osteoblast differentiation. Represses the activity of the circadian transcriptional activator: NPAS2-BMAL1 heterodimer. The protein is Twist-related protein 1 (TWIST1) of Pan troglodytes (Chimpanzee).